Reading from the N-terminus, the 506-residue chain is Probable Xaa-Pro aminopeptidase PAAG_05466 (506 aa).

The Mn(2+) site is built by Asp-285, Asp-296, Glu-433, and Glu-471.

Belongs to the peptidase M24B family. Requires Mn(2+) as cofactor.

The catalysed reaction is Release of any N-terminal amino acid, including proline, that is linked to proline, even from a dipeptide or tripeptide.. Functionally, catalyzes the removal of a penultimate prolyl residue from the N-termini of peptides. The chain is Probable Xaa-Pro aminopeptidase PAAG_05466 from Paracoccidioides lutzii (strain ATCC MYA-826 / Pb01) (Paracoccidioides brasiliensis).